The primary structure comprises 81 residues: RNA-binding protein Hfq (81 aa).

In terms of domain architecture, Sm spans 11–71 (DIFLNNARKN…ISTITPTKPI (61 aa)).

Belongs to the Hfq family. In terms of assembly, homohexamer.

In terms of biological role, RNA chaperone that binds small regulatory RNA (sRNAs) and mRNAs to facilitate mRNA translational regulation in response to envelope stress, environmental stress and changes in metabolite concentrations. Also binds with high specificity to tRNAs. This Clostridium beijerinckii (strain ATCC 51743 / NCIMB 8052) (Clostridium acetobutylicum) protein is RNA-binding protein Hfq.